The following is a 164-amino-acid chain: Zinc finger protein ZAT8 (164 aa).

C2H2-type zinc fingers lie at residues 37–59 (FRCK…RASH) and 85–107 (HPCP…MRRH).

Its subcellular location is the nucleus. Its function is as follows. Probable transcription factor that may be involved in stress responses. The polypeptide is Zinc finger protein ZAT8 (ZAT8) (Arabidopsis thaliana (Mouse-ear cress)).